Reading from the N-terminus, the 148-residue chain is Augurin (148 aa).

The signal sequence occupies residues 1-31 (MSTSSARPAVLALAGLALLLLLCLGPDGISG). 2 propeptides span residues 32–70 (NKLK…RAKR) and 133–148 (SRES…YNDY).

Belongs to the augurin family. Expressed in the intermediate lobe of pituitary, glomerular layer of adrenal cortex, choroid plexus and atrioventricular node of the heart. Expressed in the brain with high expression in the choroid plexus and the epithelial lining of the central canal and expression in the gray matter of the spinal cord (at protein level).

Its subcellular location is the secreted. It is found in the cytoplasm. It localises to the apical cell membrane. In terms of biological role, probable hormone that may attenuate cell proliferation and induce senescence of oligodendrocyte and neural precursor cells in the central nervous system. ECRG4-induced senescence is characterized by G1 arrest, RB1 dephosphorylation and accelerated CCND1 and CCND3 proteasomal degradation. The protein is Augurin of Mus musculus (Mouse).